The chain runs to 683 residues: Eukaryotic translation initiation factor 3 subunit B (683 aa).

A disordered region spans residues 1 to 25 (MAKKKGEEQDFEEEPNFDDPEGFVD). The segment covering 9–25 (QDFEEEPNFDDPEGFVD) has biased composition (acidic residues). Residues 49–133 (NVIVVDNIPV…YTLLVNRFAD (85 aa)) form the RRM domain. WD repeat units follow at residues 199-238 (KRER…KVNK), 240-279 (AHSN…EKRT), 283-321 (DGMS…LLDM), 324-359 (IRVE…TLMA), 435-477 (EVKE…EPVL), and 522-567 (GDHY…KRVN). A coiled-coil region spans residues 611–638 (MTRASKELIEKRAKLREQFTEYRSKRVK).

This sequence belongs to the eIF-3 subunit B family. As to quaternary structure, component of the eukaryotic translation initiation factor 3 (eIF-3) complex.

The protein localises to the cytoplasm. In terms of biological role, RNA-binding component of the eukaryotic translation initiation factor 3 (eIF-3) complex, which is involved in protein synthesis of a specialized repertoire of mRNAs and, together with other initiation factors, stimulates binding of mRNA and methionyl-tRNAi to the 40S ribosome. The eIF-3 complex specifically targets and initiates translation of a subset of mRNAs involved in cell proliferation. The polypeptide is Eukaryotic translation initiation factor 3 subunit B (Anopheles gambiae (African malaria mosquito)).